The chain runs to 110 residues: Plasma membrane ATPase (110 aa).

Mg(2+) contacts are provided by D72 and D76. Positions A88 to K110 are disordered. Over residues N98–K110 the composition is skewed to basic and acidic residues.

It belongs to the cation transport ATPase (P-type) (TC 3.A.3) family. Type IIIA subfamily. The N-terminus is blocked.

Its subcellular location is the cell membrane. It carries out the reaction ATP + H2O + H(+)(in) = ADP + phosphate + 2 H(+)(out). Functionally, the plasma membrane ATPase of plants and fungi is a hydrogen ion pump. The proton gradient it generates drives the active transport of nutrients by H(+)-symport. The resulting external acidification and/or internal alkinization may mediate growth responses. The sequence is that of Plasma membrane ATPase from Avena sativa (Oat).